The primary structure comprises 663 residues: Telomere length regulator taz1 (663 aa).

A disordered region spans residues 15–72 (ENEGDQQFDKEVVQNSDSNIETGQISDSLTKAVEERAETESSSNLSNFTTSESESSKP). Polar residues-rich tracts occupy residues 27–43 (VQNS…SDSL) and 54–67 (ESSS…TSES). At serine 332 the chain carries Phosphoserine. Disordered regions lie at residues 389-412 (GSTA…TFSE) and 471-554 (RAKS…PYEG). Composition is skewed to basic and acidic residues over residues 489–498 (KRGDNLRREA) and 512–524 (PPVR…ESRS). Residues 556-612 (RTRRKWTDEEENELYEMISQHGCCWSKIIHIQKLENGPLKTFGPTQIKDKARLIKAR) enclose the Myb-like domain.

In terms of assembly, interacts with taf1 via the Myb domain, and ccq1.

The protein localises to the cytoplasm. It is found in the nucleus. It localises to the chromosome. The protein resides in the telomere. In terms of biological role, regulates telomere length and function. Required for the repression of telomere-adjacent gene expression and for normal meiosis or sporulation. It may be a negative regulator of the telomere-replicating enzyme, telomerase, or may protect against activation of telomerase-independent pathways of telomere elongation. It may be involved in the interactions between chromosomes and spindle proteins, disruption of these interactions would lead to defective meiosis. The protein is Telomere length regulator taz1 (taz1) of Schizosaccharomyces pombe (strain 972 / ATCC 24843) (Fission yeast).